Consider the following 490-residue polypeptide: Betaine aldehyde dehydrogenase (490 aa).

NAD(+) contacts are provided by residues lysine 174, glutamate 177, and 227–232 (GGIETG). Residues glutamate 249 and cysteine 283 contribute to the active site. Glutamate 384 provides a ligand contact to NAD(+).

Belongs to the aldehyde dehydrogenase family. As to quaternary structure, homodimer.

The enzyme catalyses betaine aldehyde + NAD(+) + H2O = glycine betaine + NADH + 2 H(+). It participates in amine and polyamine biosynthesis; betaine biosynthesis via choline pathway; betaine from betaine aldehyde: step 1/1. With respect to regulation, activity is stimulated by low concentrations of salts and by moderate concentrations of glycine betaine. Highly tolerant to high ionic conditions. In vitro, activity is highly stimulated in the presence of proline. Functionally, involved in the biosynthesis of the osmoprotectant glycine betaine from choline. Catalyzes the oxidation of betaine aldehyde to betaine. Shows specificity for betaine aldehyde as substrate. Can use both NAD(+) and NADP(+), but NAD(+) is strongly preferred. The sequence is that of Betaine aldehyde dehydrogenase from Bacillus subtilis (strain 168).